Consider the following 280-residue polypeptide: Ribosomal protein L11 methyltransferase (280 aa).

Residues threonine 131, glycine 152, aspartate 174, and asparagine 217 each contribute to the S-adenosyl-L-methionine site.

It belongs to the methyltransferase superfamily. PrmA family.

The protein localises to the cytoplasm. It carries out the reaction L-lysyl-[protein] + 3 S-adenosyl-L-methionine = N(6),N(6),N(6)-trimethyl-L-lysyl-[protein] + 3 S-adenosyl-L-homocysteine + 3 H(+). Methylates ribosomal protein L11. In Bacteroides thetaiotaomicron (strain ATCC 29148 / DSM 2079 / JCM 5827 / CCUG 10774 / NCTC 10582 / VPI-5482 / E50), this protein is Ribosomal protein L11 methyltransferase.